Reading from the N-terminus, the 152-residue chain is Large ribosomal subunit protein uL13 (152 aa).

This sequence belongs to the universal ribosomal protein uL13 family. Part of the 50S ribosomal subunit.

This protein is one of the early assembly proteins of the 50S ribosomal subunit, although it is not seen to bind rRNA by itself. It is important during the early stages of 50S assembly. The sequence is that of Large ribosomal subunit protein uL13 from Wolbachia sp. subsp. Drosophila simulans (strain wRi).